The chain runs to 400 residues: 1-deoxy-D-xylulose 5-phosphate reductoisomerase (400 aa).

The NADPH site is built by T10, G11, S12, I13, G36, N38, and N124. K125 contacts 1-deoxy-D-xylulose 5-phosphate. Position 126 (E126) interacts with NADPH. Mn(2+) is bound at residue D150. 4 residues coordinate 1-deoxy-D-xylulose 5-phosphate: S151, E152, S186, and H209. Mn(2+) is bound at residue E152. Residue G215 coordinates NADPH. Residues S222, N227, K228, and E231 each coordinate 1-deoxy-D-xylulose 5-phosphate. E231 provides a ligand contact to Mn(2+).

It belongs to the DXR family. It depends on Mg(2+) as a cofactor. Mn(2+) is required as a cofactor.

It catalyses the reaction 2-C-methyl-D-erythritol 4-phosphate + NADP(+) = 1-deoxy-D-xylulose 5-phosphate + NADPH + H(+). Its pathway is isoprenoid biosynthesis; isopentenyl diphosphate biosynthesis via DXP pathway; isopentenyl diphosphate from 1-deoxy-D-xylulose 5-phosphate: step 1/6. Functionally, catalyzes the NADPH-dependent rearrangement and reduction of 1-deoxy-D-xylulose-5-phosphate (DXP) to 2-C-methyl-D-erythritol 4-phosphate (MEP). The polypeptide is 1-deoxy-D-xylulose 5-phosphate reductoisomerase (Aliivibrio fischeri (strain MJ11) (Vibrio fischeri)).